The primary structure comprises 444 residues: Phosphoglucosamine mutase (444 aa).

The Phosphoserine intermediate role is filled by Ser-102. Ser-102, Asp-241, Asp-243, and Asp-245 together coordinate Mg(2+). Ser-102 carries the post-translational modification Phosphoserine.

It belongs to the phosphohexose mutase family. Requires Mg(2+) as cofactor. Post-translationally, activated by phosphorylation.

It catalyses the reaction alpha-D-glucosamine 1-phosphate = D-glucosamine 6-phosphate. Its function is as follows. Catalyzes the conversion of glucosamine-6-phosphate to glucosamine-1-phosphate. The protein is Phosphoglucosamine mutase of Actinobacillus succinogenes (strain ATCC 55618 / DSM 22257 / CCUG 43843 / 130Z).